Reading from the N-terminus, the 241-residue chain is Protein GrpE (241 aa).

Positions 28–49 (QNCQKEETQTTNKDNQKEDETF) are enriched in basic and acidic residues. The interval 28-78 (QNCQKEETQTTNKDNQKEDETFKNQPNKTKQTNTKQQKHLSKESSHQQITK) is disordered. The span at 50–62 (KNQPNKTKQTNTK) shows a compositional bias: low complexity.

Belongs to the GrpE family. In terms of assembly, homodimer.

The protein localises to the cytoplasm. Participates actively in the response to hyperosmotic and heat shock by preventing the aggregation of stress-denatured proteins, in association with DnaK and GrpE. It is the nucleotide exchange factor for DnaK and may function as a thermosensor. Unfolded proteins bind initially to DnaJ; upon interaction with the DnaJ-bound protein, DnaK hydrolyzes its bound ATP, resulting in the formation of a stable complex. GrpE releases ADP from DnaK; ATP binding to DnaK triggers the release of the substrate protein, thus completing the reaction cycle. Several rounds of ATP-dependent interactions between DnaJ, DnaK and GrpE are required for fully efficient folding. This chain is Protein GrpE, found in Aster yellows witches'-broom phytoplasma (strain AYWB).